Reading from the N-terminus, the 101-residue chain is MSRRRRRASATRRSAAVSPPHTPYGSGCISACSWHSTITGHRAQTRLAASSRASRAAVGSFDGAKNRPASSRRQAASECQGPASSSRAGVRWAGTAANGRG.

Residues 1–10 show a composition bias toward basic residues; sequence MSRRRRRASA. 2 disordered regions span residues 1–26 and 45–101; these read MSRR…PYGS and TRLA…NGRG. Positions 45-60 are enriched in low complexity; sequence TRLAASSRASRAAVGS. Positions 55-74 form a DNA-binding region, H-T-H motif; it reads RAAVGSFDGAKNRPASSRRQ.

Functionally, increases the production of several extracellular enzymes, like alkaline phosphatase, amylase, protease or lipase. When present in high concentrations, delays the production of pigments and sporulation. This chain is Secreted enzymes activator (saf), found in Streptomyces griseus.